We begin with the raw amino-acid sequence, 494 residues long: Glutamyl-tRNA(Gln) amidotransferase subunit A (494 aa).

Residues Lys81 and Ser156 each act as charge relay system in the active site. Ser180 (acyl-ester intermediate) is an active-site residue.

This sequence belongs to the amidase family. GatA subfamily. Heterotrimer of A, B and C subunits.

It carries out the reaction L-glutamyl-tRNA(Gln) + L-glutamine + ATP + H2O = L-glutaminyl-tRNA(Gln) + L-glutamate + ADP + phosphate + H(+). Allows the formation of correctly charged Gln-tRNA(Gln) through the transamidation of misacylated Glu-tRNA(Gln) in organisms which lack glutaminyl-tRNA synthetase. The reaction takes place in the presence of glutamine and ATP through an activated gamma-phospho-Glu-tRNA(Gln). The polypeptide is Glutamyl-tRNA(Gln) amidotransferase subunit A (Mycobacterium tuberculosis (strain ATCC 25177 / H37Ra)).